An 842-amino-acid polypeptide reads, in one-letter code: Protein P (842 aa).

The terminal protein domain (TP) stretch occupies residues 1–177 (MPLSYQHFRR…FCGSPYSWEQ (177 aa)). The spacer stretch occupies residues 178–345 (ELHHGAFLDG…YCLSHLVNLL (168 aa)). The segment at 186 to 273 (DGPSRMGEES…AKNIASRSAS (88 aa)) is disordered. Residues 223–239 (GPQSQQRPLDRSQQGRS) show a composition bias toward polar residues. The tract at residues 346–689 (EDWGPCTEHG…YLNLYPVARQ (344 aa)) is polymerase/reverse transcriptase domain (RT). Residues 356-599 (RHHIRIPRTP…YSLNFMGYVI (244 aa)) form the Reverse transcriptase domain. Residues Asp-428, Asp-550, and Asp-551 each contribute to the Mg(2+) site.

This sequence belongs to the hepadnaviridae P protein family.

The catalysed reaction is DNA(n) + a 2'-deoxyribonucleoside 5'-triphosphate = DNA(n+1) + diphosphate. The enzyme catalyses Endonucleolytic cleavage to 5'-phosphomonoester.. Activated by host HSP70 and HSP40 in vitro to be able to bind the epsilon loop of the pgRNA. Because deletion of the RNase H region renders the protein partly chaperone-independent, the chaperones may be needed indirectly to relieve occlusion of the RNA-binding site by this domain. Inhibited by several reverse-transcriptase inhibitors: Lamivudine, Adefovir and Entecavir. Its function is as follows. Multifunctional enzyme that converts the viral RNA genome into dsDNA in viral cytoplasmic capsids. This enzyme displays a DNA polymerase activity that can copy either DNA or RNA templates, and a ribonuclease H (RNase H) activity that cleaves the RNA strand of RNA-DNA heteroduplexes in a partially processive 3'- to 5'-endonucleasic mode. Neo-synthesized pregenomic RNA (pgRNA) are encapsidated together with the P protein, and reverse-transcribed inside the nucleocapsid. Initiation of reverse-transcription occurs first by binding the epsilon loop on the pgRNA genome, and is initiated by protein priming, thereby the 5'-end of (-)DNA is covalently linked to P protein. Partial (+)DNA is synthesized from the (-)DNA template and generates the relaxed circular DNA (RC-DNA) genome. After budding and infection, the RC-DNA migrates in the nucleus, and is converted into a plasmid-like covalently closed circular DNA (cccDNA). The activity of P protein does not seem to be necessary for cccDNA generation, and is presumably released from (+)DNA by host nuclear DNA repair machinery. In Homo sapiens (Human), this protein is Protein P.